Here is a 260-residue protein sequence, read N- to C-terminus: MVLIRVLANLLILQLSYAQKSSELIIGGDECNINEHRFLVALYTSRSRRFYCGGTLINQEWVLTAAHCDRKNIRIKLGMHSEKVPNEDAQTRVPKEKFFCLSSKTYTKWDKDIMLMRLKRPVNNSTHIAPVSLPSNPPSVGSVCRVMGWGTITSPQETYPDVPHCANINILDYEVCQAAHGGLPATSRTLCAGILKGGKDSCKGDSGGPLICNGQFQGIASWGAHPCGQSLKPGVYTKVFDYTEWIQSTIAGNTDATCPP.

The N-terminal stretch at 1-18 is a signal peptide; it reads MVLIRVLANLLILQLSYA. Positions 19 to 24 are excised as a propeptide; sequence QKSSEL. The Peptidase S1 domain maps to 25–251; that stretch reads IIGGDECNIN…YTEWIQSTIA (227 aa). Disulfide bonds link C31–C165, C52–C68, C100–C258, C144–C212, C176–C191, and C202–C227. Active-site charge relay system residues include H67 and D112. N-linked (GlcNAc...) asparagine glycans are attached at residues N123 and N124. S206 (charge relay system) is an active-site residue.

The protein belongs to the peptidase S1 family. Snake venom subfamily. In terms of assembly, monomer. Expressed by the venom gland.

It localises to the secreted. Snake venom serine protease that may act in the hemostasis system of the prey. This Gloydius ussuriensis (Ussuri mamushi) protein is Snake venom serine protease gussurobin.